The primary structure comprises 432 residues: Adenylosuccinate synthetase (432 aa).

GTP is bound by residues 13-19 (GDEGKGK) and 41-43 (GHT). The Proton acceptor role is filled by aspartate 14. Positions 14 and 41 each coordinate Mg(2+). IMP is bound by residues 14-17 (DEGK), 39-42 (NAGH), threonine 131, arginine 145, glutamine 226, threonine 241, and arginine 305. Catalysis depends on histidine 42, which acts as the Proton donor. A substrate-binding site is contributed by 301–307 (SVTGRAR). GTP-binding positions include arginine 307, 333 to 335 (KLD), and 416 to 418 (STG).

It belongs to the adenylosuccinate synthetase family. Homodimer. Requires Mg(2+) as cofactor.

It localises to the cytoplasm. The catalysed reaction is IMP + L-aspartate + GTP = N(6)-(1,2-dicarboxyethyl)-AMP + GDP + phosphate + 2 H(+). It participates in purine metabolism; AMP biosynthesis via de novo pathway; AMP from IMP: step 1/2. In terms of biological role, plays an important role in the de novo pathway of purine nucleotide biosynthesis. Catalyzes the first committed step in the biosynthesis of AMP from IMP. The polypeptide is Adenylosuccinate synthetase (Neisseria meningitidis serogroup A / serotype 4A (strain DSM 15465 / Z2491)).